The primary structure comprises 271 residues: Tryptophan synthase alpha chain (271 aa).

Catalysis depends on proton acceptor residues Glu-49 and Asp-60.

The protein belongs to the TrpA family. As to quaternary structure, tetramer of two alpha and two beta chains.

The enzyme catalyses (1S,2R)-1-C-(indol-3-yl)glycerol 3-phosphate + L-serine = D-glyceraldehyde 3-phosphate + L-tryptophan + H2O. The protein operates within amino-acid biosynthesis; L-tryptophan biosynthesis; L-tryptophan from chorismate: step 5/5. In terms of biological role, the alpha subunit is responsible for the aldol cleavage of indoleglycerol phosphate to indole and glyceraldehyde 3-phosphate. This chain is Tryptophan synthase alpha chain, found in Azoarcus sp. (strain BH72).